A 91-amino-acid polypeptide reads, in one-letter code: Small ribosomal subunit protein bS20 (91 aa).

Positions 1–28 are disordered; that stretch reads MANTASAEKRNRQAQKRRARNVQVRTGV.

This sequence belongs to the bacterial ribosomal protein bS20 family.

Binds directly to 16S ribosomal RNA. The protein is Small ribosomal subunit protein bS20 of Anaeromyxobacter dehalogenans (strain 2CP-1 / ATCC BAA-258).